The following is a 671-amino-acid chain: Palmitoleoyl-protein carboxylesterase NOTUM (671 aa).

The signal sequence occupies residues Met-1–Ser-46. Asn-95 carries an N-linked (GlcNAc...) asparagine glycan. Active-site charge relay system residues include Ser-237 and Asp-338. A glycan (N-linked (GlcNAc...) asparagine) is linked at Asn-372. His-384 acts as the Charge relay system in catalysis. Residues His-411–Pro-592 form a disordered region. Positions Asn-439–His-454 are enriched in basic residues. A compositionally biased stretch (basic and acidic residues) spans Leu-470–Arg-486. Positions Gln-487–Gln-497 are enriched in basic residues. A compositionally biased stretch (basic and acidic residues) spans Gln-505–Ser-514. The segment covering Pro-570 to Thr-583 has biased composition (polar residues). Residues Asn-578 and Asn-612 are each glycosylated (N-linked (GlcNAc...) asparagine).

The protein belongs to the pectinacetylesterase family. Notum subfamily.

Its subcellular location is the secreted. It localises to the cell surface. It carries out the reaction [Wnt protein]-O-(9Z)-hexadecenoyl-L-serine + H2O = [Wnt protein]-L-serine + (9Z)-hexadecenoate + H(+). Functionally, carboxylesterase that acts as a key negative regulator of the Wnt signaling pathway by specifically mediating depalmitoleoylation of WNT proteins. Serine palmitoleoylation of WNT proteins is required for efficient binding to frizzled receptors. Also acts as a regulator of long-range activity of Hedgehog (hh), possibly by regulating the switch between low and high level hh pathway signaling. This is Palmitoleoyl-protein carboxylesterase NOTUM from Drosophila melanogaster (Fruit fly).